Consider the following 275-residue polypeptide: 2'-N-acetylparomamine deacetylase (275 aa).

Residues H14, D17, and H166 each contribute to the Zn(2+) site.

Belongs to the PIGL family. Zn(2+) serves as cofactor.

The enzyme catalyses 2'-N-acetylparomamine + H2O = paromamine + acetate. The protein operates within antibiotic biosynthesis; butirosin biosynthesis. Deacetylase involved in the biosynthesis of butirosin by mediating deacetylation of 2'-N-acetylparomamine. The protein is 2'-N-acetylparomamine deacetylase (btrD) of Niallia circulans (Bacillus circulans).